The chain runs to 58 residues: Potassium channel toxin alpha-KTx 16.6 (58 aa).

Positions 1 to 22 (MKILSVLLIALIICSINICSEA) are cleaved as a signal peptide. Intrachain disulfides connect Cys29–Cys50, Cys35–Cys55, and Cys39–Cys57.

The protein belongs to the short scorpion toxin superfamily. Potassium channel inhibitor family. Alpha-KTx 16 subfamily. As to expression, expressed by the venom gland.

Its subcellular location is the secreted. Inhibits potassium channel. In Buthus israelis (Israeli scorpion), this protein is Potassium channel toxin alpha-KTx 16.6.